Here is a 450-residue protein sequence, read N- to C-terminus: Phosphoglucosamine mutase (450 aa).

The active-site Phosphoserine intermediate is S102. S102, D243, D245, and D247 together coordinate Mg(2+). S102 is modified (phosphoserine).

Belongs to the phosphohexose mutase family. Mg(2+) is required as a cofactor. In terms of processing, activated by phosphorylation.

It catalyses the reaction alpha-D-glucosamine 1-phosphate = D-glucosamine 6-phosphate. Catalyzes the conversion of glucosamine-6-phosphate to glucosamine-1-phosphate. The polypeptide is Phosphoglucosamine mutase (Rhizobium leguminosarum bv. trifolii (strain WSM2304)).